The primary structure comprises 328 residues: Gonadotropin-releasing hormone receptor (328 aa).

Topologically, residues 1 to 38 (MANSASPEQNQNHCSAINSSILLTQGNLPTLTLSGKIR) are extracellular. An N-linked (GlcNAc...) asparagine glycan is attached at Asn18. A helical transmembrane segment spans residues 39-58 (VTVTFFLFLLSTAFNASFLL). The Cytoplasmic segment spans residues 59-77 (KLQKWTQRKEKGKKLSRMK). Residues 78–97 (VLLKHLTLANLLETLIVMPL) traverse the membrane as a helical segment. The Extracellular segment spans residues 98 to 115 (DGMWNITVQWYAGEFLCK). A glycan (N-linked (GlcNAc...) asparagine) is linked at Asn102. Cys114 and Cys196 form a disulfide bridge. A helical membrane pass occupies residues 116-137 (VLSYLKLFSMYAPAFMMVVISL). The Cytoplasmic portion of the chain corresponds to 138-164 (DRSLAITRPLAVKSNSRLGRFMIGLAW). A helical membrane pass occupies residues 165–184 (LLSSIFAGPQLYIFRMIHLA). The Extracellular segment spans residues 185-212 (DSSGQTEGFSQCVTHGSFPQWWHQAFYN). Residues 213 to 232 (FFTFSCLFIIPLLIMLICNA) traverse the membrane as a helical segment. At 233–281 (KIMFTLTRVLQQDPHNLQLNQSKNNIPRARLRTLKMTVAFAASFIVCWT) the chain is on the cytoplasmic side. Residues 282-300 (PYYVLGIWYWFDPEMVNRV) form a helical membrane-spanning segment. The Extracellular segment spans residues 301-306 (SDPVNH). A helical transmembrane segment spans residues 307–326 (FFFLFAFLNPCFDPLIYGYF). Over 327–328 (SL) the chain is Cytoplasmic.

This sequence belongs to the G-protein coupled receptor 1 family. Pituitary gland.

Its subcellular location is the cell membrane. Receptor for gonadotropin releasing hormone (GnRH) that mediates the action of GnRH to stimulate the secretion of the gonadotropic hormones luteinizing hormone (LH) and follicle-stimulating hormone (FSH). This receptor mediates its action by association with G-proteins that activate a phosphatidylinositol-calcium second messenger system. This Sus scrofa (Pig) protein is Gonadotropin-releasing hormone receptor (GNRHR).